The following is a 492-amino-acid chain: UPF0236 protein TTE0402 (492 aa).

Belongs to the UPF0236 family.

This chain is UPF0236 protein TTE0402, found in Caldanaerobacter subterraneus subsp. tengcongensis (strain DSM 15242 / JCM 11007 / NBRC 100824 / MB4) (Thermoanaerobacter tengcongensis).